Consider the following 320-residue polypeptide: 4-hydroxy-3-methylbut-2-enyl diphosphate reductase (320 aa).

Cys12 is a [4Fe-4S] cluster binding site. His41 and His74 together coordinate (2E)-4-hydroxy-3-methylbut-2-enyl diphosphate. Dimethylallyl diphosphate is bound by residues His41 and His74. Isopentenyl diphosphate is bound by residues His41 and His74. A [4Fe-4S] cluster-binding site is contributed by Cys96. His124 serves as a coordination point for (2E)-4-hydroxy-3-methylbut-2-enyl diphosphate. Residue His124 coordinates dimethylallyl diphosphate. His124 provides a ligand contact to isopentenyl diphosphate. The active-site Proton donor is the Glu126. Thr167 provides a ligand contact to (2E)-4-hydroxy-3-methylbut-2-enyl diphosphate. Position 197 (Cys197) interacts with [4Fe-4S] cluster. The (2E)-4-hydroxy-3-methylbut-2-enyl diphosphate site is built by Ser225, Ser226, Asn227, and Ser269. Dimethylallyl diphosphate contacts are provided by Ser225, Ser226, Asn227, and Ser269. Isopentenyl diphosphate contacts are provided by Ser225, Ser226, Asn227, and Ser269.

The protein belongs to the IspH family. [4Fe-4S] cluster serves as cofactor.

It carries out the reaction isopentenyl diphosphate + 2 oxidized [2Fe-2S]-[ferredoxin] + H2O = (2E)-4-hydroxy-3-methylbut-2-enyl diphosphate + 2 reduced [2Fe-2S]-[ferredoxin] + 2 H(+). It catalyses the reaction dimethylallyl diphosphate + 2 oxidized [2Fe-2S]-[ferredoxin] + H2O = (2E)-4-hydroxy-3-methylbut-2-enyl diphosphate + 2 reduced [2Fe-2S]-[ferredoxin] + 2 H(+). The protein operates within isoprenoid biosynthesis; dimethylallyl diphosphate biosynthesis; dimethylallyl diphosphate from (2E)-4-hydroxy-3-methylbutenyl diphosphate: step 1/1. It functions in the pathway isoprenoid biosynthesis; isopentenyl diphosphate biosynthesis via DXP pathway; isopentenyl diphosphate from 1-deoxy-D-xylulose 5-phosphate: step 6/6. Catalyzes the conversion of 1-hydroxy-2-methyl-2-(E)-butenyl 4-diphosphate (HMBPP) into a mixture of isopentenyl diphosphate (IPP) and dimethylallyl diphosphate (DMAPP). Acts in the terminal step of the DOXP/MEP pathway for isoprenoid precursor biosynthesis. This chain is 4-hydroxy-3-methylbut-2-enyl diphosphate reductase, found in Francisella tularensis subsp. novicida (strain U112).